Reading from the N-terminus, the 260-residue chain is MAGRWNLEGCTALVTGGSRGIGYGIVEELANLGASVYTCSRNQKELDECLTQWRSKGFNVEASVCDLSSRSEREEFMKTVSNHFHGKLNILVNNAGIVIYKEAKDYTMEDYSHIMSINFEAAYHLSVLAHPFLKASERGNVVFISSISGASALPYEAVYGATKGAMDQLTRCLAFEWAKDNIRVNGVGPGVIATSMVEMTIQDPEQKENLDKLIDRCALRRMGEPKELAAVVAFLCFPAASYVTGQIIYVDGGFMANGGF.

13-37 provides a ligand contact to NADP(+); sequence LVTGGSRGIGYGIVEELANLGASVY. Ser146 is a binding site for substrate. Residue Tyr159 is the Proton acceptor of the active site.

This sequence belongs to the short-chain dehydrogenases/reductases (SDR) family.

The enzyme catalyses pseudotropine + NADP(+) = tropinone + NADPH + H(+). Its pathway is alkaloid biosynthesis; tropane alkaloid biosynthesis. Catalyzes the stereospecific reduction of tropinone to pseudotropine. The sequence is that of Tropinone reductase 2 (TR2) from Hyoscyamus niger (Black henbane).